Consider the following 315-residue polypeptide: Shiga toxin subunit A (315 aa).

Positions 1 to 22 (MKIIIFRVLTFFFVIFSVNVVA) are cleaved as a signal peptide. The interval 23-273 (KEFTLDFSTA…CHHHASRVAR (251 aa)) is A1. Glu-189 is an active-site residue. An intrachain disulfide couples Cys-264 to Cys-283. Residues 274–315 (MASDEFPSMCPADGRVRGITHNKILWDSSTLGAILMRRTISS) form an A2 region.

Belongs to the ribosome-inactivating protein family. Shiga toxin contains a single subunit A and five copies of subunit B.

It carries out the reaction Endohydrolysis of the N-glycosidic bond at one specific adenosine on the 28S rRNA.. The A subunit is responsible for inhibiting protein synthesis through the catalytic inactivation of 60S ribosomal subunits. After endocytosis, the A subunit is cleaved by furin in two fragments, A1 and A2: A1 is the catalytically active fragment, and A2 is essential for holotoxin assembly with the B subunits. This is Shiga toxin subunit A (stxA) from Shigella sonnei (Shigella sonnei bacteriophage 7888).